The sequence spans 651 residues: Bromodomain-containing protein 7 (651 aa).

K21 is covalently cross-linked (Glycyl lysine isopeptide (Lys-Gly) (interchain with G-Cter in SUMO2)). Polar residues predominate over residues T35–D45. The tract at residues T35 to E132 is disordered. A compositionally biased stretch (basic and acidic residues) spans S47–K57. K52 is covalently cross-linked (Glycyl lysine isopeptide (Lys-Gly) (interchain with G-Cter in SUMO2)). The span at H58–G69 shows a compositional bias: basic residues. The short motif at K65–R96 is the Nuclear localization signal element. A compositionally biased stretch (basic and acidic residues) spans E70–Q106. Residues K127, K186, K197, K201, K212, and K241 each participate in a glycyl lysine isopeptide (Lys-Gly) (interchain with G-Cter in SUMO2) cross-link. The Bromo domain maps to V131–E235. The segment at T253 to E312 is disordered. Residues Q273–E312 show a composition bias toward basic and acidic residues. Residues S279 and S289 each carry the phosphoserine modification. Glycyl lysine isopeptide (Lys-Gly) (interchain with G-Cter in SUMO2) cross-links involve residues K305 and K307. K328 carries the N6-acetyllysine modification. K344 is covalently cross-linked (Glycyl lysine isopeptide (Lys-Gly) (interchain with G-Cter in SUMO2)). At S380 the chain carries Phosphoserine. Residue K389 forms a Glycyl lysine isopeptide (Lys-Gly) (interchain with G-Cter in SUMO2) linkage. S482 is modified (phosphoserine). A Phosphothreonine modification is found at T514. The stretch at S536 to R567 forms a coiled coil. A Phosphoserine modification is found at S621.

As to quaternary structure, interacts with TRIM24, PTPN13 and DVL1. Identified in a complex with SMARCA4/BRG1, SMARCC1/BAF155, SMARCE1/BAF57, DPF2/BAF45D and ARID2, subunits of the SWI/SNF-B (PBAF) chromatin remodeling complex. Interacts with IRF2 and HNRPUL1. Interacts (via N-terminus) with TP53. Interacts (via C-terminus) with EP300. Interacts with BRCA1. Interacts (via bromo domain) with histone H3 (via N-terminus) acetylated at 'Lys-14' (H3K14ac). Has low affinity for histone H3 acetylated at 'Lys-9' (H3K9ac). Has the highest affinity for histone H3 that is acetylated both at 'Lys-9' (H3K9ac) and at 'Lys-14' (H3K14ac). Has very low affinity for non-acetylated histone H3. Interacts (via bromo domain) with histone H4 (via N-terminus) acetylated at 'Lys-8' (H3K8ac) (in vitro).

The protein resides in the nucleus. It is found in the chromosome. Acts both as coactivator and as corepressor. May play a role in chromatin remodeling. Activator of the Wnt signaling pathway in a DVL1-dependent manner by negatively regulating the GSK3B phosphotransferase activity. Induces dephosphorylation of GSK3B at 'Tyr-216'. Down-regulates TRIM24-mediated activation of transcriptional activation by AR. Transcriptional corepressor that down-regulates the expression of target genes. Binds to target promoters, leading to increased histone H3 acetylation at 'Lys-9' (H3K9ac). Binds to the ESR1 promoter. Recruits BRCA1 and POU2F1 to the ESR1 promoter. Coactivator for TP53-mediated activation of transcription of a set of target genes. Required for TP53-mediated cell-cycle arrest in response to oncogene activation. Promotes acetylation of TP53 at 'Lys-382', and thereby promotes efficient recruitment of TP53 to target promoters. Inhibits cell cycle progression from G1 to S phase. This Pongo abelii (Sumatran orangutan) protein is Bromodomain-containing protein 7 (BRD7).